Consider the following 1454-residue polypeptide: Mediator of RNA polymerase II transcription subunit 14 (1454 aa).

A disordered region spans residues 1–34 (MAPVQLENHQLVPPGGGGGGSGGPPSAPAPPPPG). Residues 14-23 (PGGGGGGSGG) show a composition bias toward gly residues. Over residues 25–34 (PSAPAPPPPG) the composition is skewed to pro residues. The short motif at 69–73 (LTDLL) is the LXXLL motif 1 element. The segment at 188–566 (KQATLHQLNQ…VPNKPTQLSY (379 aa)) is interaction with STAT2. The interval 500-824 (LGQQRCKQSI…TKGSSISIQW (325 aa)) is interaction with SREBF1. Phosphoserine occurs at positions 617 and 986. The interval 973-1167 (ARRRSVNEDD…MPPPRKLPQR (195 aa)) is disordered. Residues 1001–1011 (QPPPQQQPFPK) show a composition bias toward pro residues. Composition is skewed to polar residues over residues 1024–1054 (PPTS…SSPS) and 1092–1101 (DPSSPYTMVS). Phosphoserine is present on residues serine 1112, serine 1119, serine 1128, serine 1136, and serine 1144. Polar residues predominate over residues 1147–1156 (AGTSSQTMPT). The LXXLL motif 2 signature appears at 1182-1186 (LNILL).

The protein belongs to the Mediator complex subunit 14 family. Interacts with GATA1. Component of the Mediator complex, which is composed of MED1, MED4, MED6, MED7, MED8, MED9, MED10, MED11, MED12, MED13, MED13L, MED14, MED15, MED16, MED17, MED18, MED19, MED20, MED21, MED22, MED23, MED24, MED25, MED26, MED27, MED29, MED30, MED31, CCNC, CDK8 and CDC2L6/CDK11. The MED12, MED13, CCNC and CDK8 subunits form a distinct module termed the CDK8 module. Mediator containing the CDK8 module is less active than Mediator lacking this module in supporting transcriptional activation. Individual preparations of the Mediator complex lacking one or more distinct subunits have been variously termed ARC, CRSP, DRIP, PC2, SMCC and TRAP. Interacts with AR, ESR1, SREBF1 and STAT2. In terms of tissue distribution, ubiquitous.

Its subcellular location is the nucleus. Functionally, component of the Mediator complex, a coactivator involved in the regulated transcription of nearly all RNA polymerase II-dependent genes. Mediator functions as a bridge to convey information from gene-specific regulatory proteins to the basal RNA polymerase II transcription machinery. Mediator is recruited to promoters by direct interactions with regulatory proteins and serves as a scaffold for the assembly of a functional preinitiation complex with RNA polymerase II and the general transcription factors. The chain is Mediator of RNA polymerase II transcription subunit 14 (MED14) from Homo sapiens (Human).